Reading from the N-terminus, the 947-residue chain is Bifunctional glutamine synthetase adenylyltransferase/adenylyl-removing enzyme (947 aa).

The interval 1-440 (MTPLSSPLSQ…VFNELIGDDE (440 aa)) is adenylyl removase. The segment at 450–947 (SEPWREVWQD…ASWRKWLVAV (498 aa)) is adenylyl transferase.

The protein belongs to the GlnE family. Mg(2+) serves as cofactor.

It carries out the reaction [glutamine synthetase]-O(4)-(5'-adenylyl)-L-tyrosine + phosphate = [glutamine synthetase]-L-tyrosine + ADP. It catalyses the reaction [glutamine synthetase]-L-tyrosine + ATP = [glutamine synthetase]-O(4)-(5'-adenylyl)-L-tyrosine + diphosphate. In terms of biological role, involved in the regulation of glutamine synthetase GlnA, a key enzyme in the process to assimilate ammonia. When cellular nitrogen levels are high, the C-terminal adenylyl transferase (AT) inactivates GlnA by covalent transfer of an adenylyl group from ATP to specific tyrosine residue of GlnA, thus reducing its activity. Conversely, when nitrogen levels are low, the N-terminal adenylyl removase (AR) activates GlnA by removing the adenylyl group by phosphorolysis, increasing its activity. The regulatory region of GlnE binds the signal transduction protein PII (GlnB) which indicates the nitrogen status of the cell. This chain is Bifunctional glutamine synthetase adenylyltransferase/adenylyl-removing enzyme, found in Salmonella agona (strain SL483).